We begin with the raw amino-acid sequence, 261 residues long: MTHQTHAYHMVNPSPWPLTGALSALLMTSGLIMWFHFNSTILLMLGLTTNMLTMYQWWRDVIRESTFQGHHTPNVQKGLRYGMILFIISEVLFFTGFFWAFYHSSLAPTPELGGCWPPTGIHPLNPLEVPLLNTSVLLASGVSITWAHHSLMEGNRNHMLQALFITIALGVYFTLLQASEYYEAPFTISDGVYGSTFFVATGFHGLHVIIGSTFLIVCFFRQLKFHFTSNHHFGFEAAAWYWHFVDVVWLFLYVSIYWWGS.

Over 1–15 (MTHQTHAYHMVNPSP) the chain is Mitochondrial matrix. Residues 16-34 (WPLTGALSALLMTSGLIMW) form a helical membrane-spanning segment. Topologically, residues 35–40 (FHFNST) are mitochondrial intermembrane. Residues 41–66 (ILLMLGLTTNMLTMYQWWRDVIREST) traverse the membrane as a helical segment. The Mitochondrial matrix segment spans residues 67 to 72 (FQGHHT). Residues 73–105 (PNVQKGLRYGMILFIISEVLFFTGFFWAFYHSS) traverse the membrane as a helical segment. At 106–128 (LAPTPELGGCWPPTGIHPLNPLE) the chain is on the mitochondrial intermembrane side. Residues 129–152 (VPLLNTSVLLASGVSITWAHHSLM) form a helical membrane-spanning segment. At 153 to 155 (EGN) the chain is on the mitochondrial matrix side. Residues 156 to 183 (RNHMLQALFITIALGVYFTLLQASEYYE) form a helical membrane-spanning segment. Residues 184-190 (APFTISD) lie on the Mitochondrial intermembrane side of the membrane. A helical transmembrane segment spans residues 191–223 (GVYGSTFFVATGFHGLHVIIGSTFLIVCFFRQL). The Mitochondrial matrix segment spans residues 224 to 232 (KFHFTSNHH). Residues 233–256 (FGFEAAAWYWHFVDVVWLFLYVSI) form a helical membrane-spanning segment. At 257 to 261 (YWWGS) the chain is on the mitochondrial intermembrane side.

It belongs to the cytochrome c oxidase subunit 3 family. In terms of assembly, component of the cytochrome c oxidase (complex IV, CIV), a multisubunit enzyme composed of 14 subunits. The complex is composed of a catalytic core of 3 subunits MT-CO1, MT-CO2 and MT-CO3, encoded in the mitochondrial DNA, and 11 supernumerary subunits COX4I, COX5A, COX5B, COX6A, COX6B, COX6C, COX7A, COX7B, COX7C, COX8 and NDUFA4, which are encoded in the nuclear genome. The complex exists as a monomer or a dimer and forms supercomplexes (SCs) in the inner mitochondrial membrane with NADH-ubiquinone oxidoreductase (complex I, CI) and ubiquinol-cytochrome c oxidoreductase (cytochrome b-c1 complex, complex III, CIII), resulting in different assemblies (supercomplex SCI(1)III(2)IV(1) and megacomplex MCI(2)III(2)IV(2)).

The protein localises to the mitochondrion inner membrane. It carries out the reaction 4 Fe(II)-[cytochrome c] + O2 + 8 H(+)(in) = 4 Fe(III)-[cytochrome c] + 2 H2O + 4 H(+)(out). In terms of biological role, component of the cytochrome c oxidase, the last enzyme in the mitochondrial electron transport chain which drives oxidative phosphorylation. The respiratory chain contains 3 multisubunit complexes succinate dehydrogenase (complex II, CII), ubiquinol-cytochrome c oxidoreductase (cytochrome b-c1 complex, complex III, CIII) and cytochrome c oxidase (complex IV, CIV), that cooperate to transfer electrons derived from NADH and succinate to molecular oxygen, creating an electrochemical gradient over the inner membrane that drives transmembrane transport and the ATP synthase. Cytochrome c oxidase is the component of the respiratory chain that catalyzes the reduction of oxygen to water. Electrons originating from reduced cytochrome c in the intermembrane space (IMS) are transferred via the dinuclear copper A center (CU(A)) of subunit 2 and heme A of subunit 1 to the active site in subunit 1, a binuclear center (BNC) formed by heme A3 and copper B (CU(B)). The BNC reduces molecular oxygen to 2 water molecules using 4 electrons from cytochrome c in the IMS and 4 protons from the mitochondrial matrix. The polypeptide is Cytochrome c oxidase subunit 3 (MT-CO3) (Eudorcas thomsonii (Thomson's gazelle)).